A 463-amino-acid polypeptide reads, in one-letter code: MTSETRTLYSQLPAIDRLLHDSAFLSLCDQYGHTQVVDLLRRMLDDARDVIRNTQTLPDWCADWAQEANLRLEKAAQSALRPVINLTGTVLHTNLGRAWQAQEAIDAVMQAMRAPVTLEYDLDGAGRGHRDRALATLLCRITGAEDACIVNNNAAAVLLMLAATASGKEVVVSRGELVEIGGAFRIPDVMRQAGCTLHEVGTTNRTHAKDYRQAVNENTGLLMKVHTSNYSIEGFTKAVEEAELAEIGRELDIPVVADLGSGSLVDLSQYGLPKEPMPQQLIAAGVSLVSFSGDKLLGGPQAGIIVGKKAMIAQLQSHPLKRALRADKMTLAALEATLRLYLHPEALSEKLPTLRLLTRSEASIREQAQRLQARLVARYGDEFTLEVKPCLSQIGSGSLPVDRLPSAAMTFTPHDGRGSRLEALAAHWRTLPVPIIGRIYDGRLWLDMRCLEDESRFMEMMLK.

Lys-295 is modified (N6-(pyridoxal phosphate)lysine).

The protein belongs to the SelA family. Homodecamer; pentamer of dimers. Binds only one seryl-tRNA(Sec) per dimer. The cofactor is pyridoxal 5'-phosphate.

It localises to the cytoplasm. The enzyme catalyses L-seryl-tRNA(Sec) + selenophosphate + H(+) = L-selenocysteinyl-tRNA(Sec) + phosphate. It functions in the pathway aminoacyl-tRNA biosynthesis; selenocysteinyl-tRNA(Sec) biosynthesis; selenocysteinyl-tRNA(Sec) from L-seryl-tRNA(Sec) (bacterial route): step 1/1. Functionally, converts seryl-tRNA(Sec) to selenocysteinyl-tRNA(Sec) required for selenoprotein biosynthesis. This Salmonella arizonae (strain ATCC BAA-731 / CDC346-86 / RSK2980) protein is L-seryl-tRNA(Sec) selenium transferase.